A 245-amino-acid polypeptide reads, in one-letter code: 5-oxoprolinase subunit A (245 aa).

Belongs to the LamB/PxpA family. Forms a complex composed of PxpA, PxpB and PxpC.

It carries out the reaction 5-oxo-L-proline + ATP + 2 H2O = L-glutamate + ADP + phosphate + H(+). Functionally, catalyzes the cleavage of 5-oxoproline to form L-glutamate coupled to the hydrolysis of ATP to ADP and inorganic phosphate. This chain is 5-oxoprolinase subunit A, found in Yersinia enterocolitica serotype O:8 / biotype 1B (strain NCTC 13174 / 8081).